Consider the following 1050-residue polypeptide: DNA polymerase I A, chloroplastic/mitochondrial (1050 aa).

Residues 1 to 91 constitute a chloroplast and mitochondrion transit peptide; it reads MAMGVSLTSH…VVFNGEWELR (91 aa). Residues 202–240 are disordered; sequence PRKGLDVGDNMDVNPKGEGIQRPLISDKSSGTANGNKNT. Polar residues predominate over residues 228–240; sequence DKSSGTANGNKNT. Positions 312 to 490 constitute a 3'-5' exonuclease domain; sequence ELICFSIYCG…LYESMTKKLQ (179 aa). Residues 673 to 694 are disordered; sequence VVEDDDVETSETQKSKTDDETD. Residues 717–1048 form a polymerase region; that stretch reads AIASLCEVCS…DAKCAQNWYA (332 aa).

Belongs to the DNA polymerase type-A family. Expressed in shoot apical meristem.

It localises to the plastid. It is found in the chloroplast. Its subcellular location is the mitochondrion. The catalysed reaction is DNA(n) + a 2'-deoxyribonucleoside 5'-triphosphate = DNA(n+1) + diphosphate. Not inhibited by aphidicolin. In terms of biological role, in addition to polymerase activity, this DNA polymerase exhibits 5'-3' exonuclease activity. Required for DNA replication and accumulation in plastids and mitochondria. May be required for DNA repair in both organelles. The sequence is that of DNA polymerase I A, chloroplastic/mitochondrial (POLIA) from Arabidopsis thaliana (Mouse-ear cress).